Here is a 134-residue protein sequence, read N- to C-terminus: Thioredoxin-like protein Clot (134 aa).

Residues 1–134 form the Thioredoxin domain; it reads MTLKKVDANP…LILPLLAPST (134 aa). Catalysis depends on nucleophile residues cysteine 48 and cysteine 51. The cysteines at positions 48 and 51 are disulfide-linked.

The protein belongs to the thioredoxin family.

Probable thiol-disulfide oxidoreductase that may participate in various redox reactions. This chain is Thioredoxin-like protein Clot, found in Arabidopsis thaliana (Mouse-ear cress).